A 445-amino-acid chain; its full sequence is tRNA-2-methylthio-N(6)-dimethylallyladenosine synthase (445 aa).

An MTTase N-terminal domain is found at 2 to 117; that stretch reads QGLYIKSYGC…LPELIVKARK (116 aa). Cys11, Cys47, Cys80, Cys157, Cys161, and Cys164 together coordinate [4Fe-4S] cluster. The Radical SAM core domain occupies 143 to 374; that stretch reads KNQKVSAFIS…QELVHKQQLE (232 aa). Residues 377 to 441 form the TRAM domain; that stretch reads KKMIGETHPV…KNHLTGIIPH (65 aa).

The protein belongs to the methylthiotransferase family. MiaB subfamily. In terms of assembly, monomer. Requires [4Fe-4S] cluster as cofactor.

Its subcellular location is the cytoplasm. The catalysed reaction is N(6)-dimethylallyladenosine(37) in tRNA + (sulfur carrier)-SH + AH2 + 2 S-adenosyl-L-methionine = 2-methylsulfanyl-N(6)-dimethylallyladenosine(37) in tRNA + (sulfur carrier)-H + 5'-deoxyadenosine + L-methionine + A + S-adenosyl-L-homocysteine + 2 H(+). In terms of biological role, catalyzes the methylthiolation of N6-(dimethylallyl)adenosine (i(6)A), leading to the formation of 2-methylthio-N6-(dimethylallyl)adenosine (ms(2)i(6)A) at position 37 in tRNAs that read codons beginning with uridine. The chain is tRNA-2-methylthio-N(6)-dimethylallyladenosine synthase from Ehrlichia ruminantium (strain Gardel).